The primary structure comprises 218 residues: MEPGFWHEKWYKQQIGFHQQDINPFLVQYWQRLALPAGAKVFVPLCGKSLDMCFLAEQGHQVIGCELNELAVQQFFSDNQLEMTQTVEGEHQHYQTEQVSLYQGDIFTLPKRITQDVTAFYDRAALIAWPEEMRAQYAKQLANLLPSGSLGLLVTLDYPQETLNGPPFAVSPNWIEAHLTDDFEIQALACQDVLADNPRFVKKEVPWLNEAAYLLKRK.

The S-adenosyl-L-methionine site is built by W10, L45, E66, and R123.

The protein belongs to the class I-like SAM-binding methyltransferase superfamily. TPMT family.

The protein resides in the cytoplasm. The catalysed reaction is S-adenosyl-L-methionine + a thiopurine = S-adenosyl-L-homocysteine + a thiopurine S-methylether.. This Shewanella sp. (strain W3-18-1) protein is Thiopurine S-methyltransferase.